Reading from the N-terminus, the 890-residue chain is DNA mismatch repair protein MutS (890 aa).

G645 to S652 is a binding site for ATP.

The protein belongs to the DNA mismatch repair MutS family.

Its function is as follows. This protein is involved in the repair of mismatches in DNA. It is possible that it carries out the mismatch recognition step. This protein has a weak ATPase activity. The sequence is that of DNA mismatch repair protein MutS from Rickettsia rickettsii (strain Iowa).